Here is a 558-residue protein sequence, read N- to C-terminus: Urocanate hydratase (558 aa).

Residues 50 to 51 (GG), Q128, 174 to 176 (GMG), E194, R199, 240 to 241 (NA), 261 to 265 (QTSAH), 271 to 272 (YI), and Y320 each bind NAD(+). Residue C408 is part of the active site. G490 is a binding site for NAD(+).

Belongs to the urocanase family. It depends on NAD(+) as a cofactor.

It is found in the cytoplasm. It carries out the reaction 4-imidazolone-5-propanoate = trans-urocanate + H2O. It functions in the pathway amino-acid degradation; L-histidine degradation into L-glutamate; N-formimidoyl-L-glutamate from L-histidine: step 2/3. Catalyzes the conversion of urocanate to 4-imidazolone-5-propionate. This chain is Urocanate hydratase, found in Deinococcus radiodurans (strain ATCC 13939 / DSM 20539 / JCM 16871 / CCUG 27074 / LMG 4051 / NBRC 15346 / NCIMB 9279 / VKM B-1422 / R1).